Reading from the N-terminus, the 623-residue chain is V-type proton ATPase catalytic subunit A (623 aa).

ATP is bound at residue 252 to 259 (GAFGCGKT).

This sequence belongs to the ATPase alpha/beta chains family. V-ATPase is a heteromultimeric enzyme composed of a peripheral catalytic V1 complex (main components: subunits A, B, C, D, E, and F) attached to an integral membrane V0 proton pore complex (main component: the proteolipid protein).

The enzyme catalyses ATP + H2O + 4 H(+)(in) = ADP + phosphate + 5 H(+)(out). Catalytic subunit of the peripheral V1 complex of vacuolar ATPase. V-ATPase vacuolar ATPase is responsible for acidifying a variety of intracellular compartments in eukaryotic cells. In Gossypium hirsutum (Upland cotton), this protein is V-type proton ATPase catalytic subunit A (CVA69.24).